Consider the following 1938-residue polypeptide: Myosin-1 (1938 aa).

The Myosin N-terminal SH3-like domain occupies 33 to 82 (DAKTSVFVADPKESFVKATVQSREGGKVTAKTEAGATVTVKEDQCFPMNP). 2 positions are modified to phosphothreonine: threonine 64 and threonine 69. The region spanning 86 to 781 (DKIEDMAMMT…LLGLLEEMRD (696 aa)) is the Myosin motor domain. Lysine 130 is modified (N6,N6,N6-trimethyllysine). 179 to 186 (GESGAGKT) lines the ATP pocket. Tyrosine 389 is modified (phosphotyrosine). Threonine 419 is subject to Phosphothreonine. Tyrosine 424 is subject to Phosphotyrosine. A Phosphoserine modification is found at serine 625. The actin-binding stretch occupies residues 658-680 (LNKLMTNLRSTHPHFVRCIIPNE). The residue at position 756 (histidine 756) is a Pros-methylhistidine. The interval 760-774 (KFGHTKVFFKAGLLG) is actin-binding. Residues 784 to 813 (LAQIITRTQARCRGFLARVEYQRMVERRES) enclose the IQ domain. Residues 842 to 1938 (LLKSAETEKE…EVHTKIISEE (1097 aa)) are a coiled coil. Phosphoserine occurs at positions 1091 and 1095. Disordered regions lie at residues 1124–1146 (EIEA…SREL) and 1152–1171 (RLEE…KKRE). The segment covering 1127–1146 (AERASRAKAEKQRSDLSREL) has biased composition (basic and acidic residues). Phosphoserine occurs at positions 1161 and 1236. Threonine 1240 carries the phosphothreonine modification. A Phosphoserine modification is found at serine 1242. Phosphothreonine is present on threonine 1254. Serine 1260 is modified (phosphoserine). Threonine 1285 is modified (phosphothreonine). 3 positions are modified to phosphoserine: serine 1291, serine 1302, and serine 1305. Tyrosine 1463 carries the phosphotyrosine modification. Threonine 1466 carries the post-translational modification Phosphothreonine. Serine 1473 carries the post-translational modification Phosphoserine. Residue tyrosine 1491 is modified to Phosphotyrosine. At serine 1494 the chain carries Phosphoserine. Threonine 1500 is modified (phosphothreonine). A Phosphoserine modification is found at serine 1513. The residue at position 1516 (threonine 1516) is a Phosphothreonine. Residues serine 1541, serine 1553, serine 1573, serine 1713, and serine 1725 each carry the phosphoserine modification. Residues threonine 1729 and threonine 1735 each carry the phosphothreonine modification. A Phosphoserine modification is found at serine 1738.

The protein belongs to the TRAFAC class myosin-kinesin ATPase superfamily. Myosin family. As to quaternary structure, muscle myosin is a hexameric protein that consists of 2 heavy chain subunits (MHC), 2 alkali light chain subunits (MLC) and 2 regulatory light chain subunits (MLC-2). Interacts with SLC26A5.

It localises to the cytoplasm. The protein localises to the myofibril. In terms of biological role, required for normal hearing. It plays a role in cochlear amplification of auditory stimuli, likely through the positive regulation of prestin (SLC26A5) activity and outer hair cell (OHC) electromotility. This chain is Myosin-1 (MYH1), found in Equus caballus (Horse).